Reading from the N-terminus, the 710-residue chain is MKQRQARLIGTPSQTRRQQELAEKLEKVKEVLEDEKKRQFNEPLFDLTKLRQALDKAIPQPEDVKGFFAQIIKSPSRYEIIFDEAMGVADIEEQEVIEKLRAKEEDEVYDFANNFVRQRRPLPQFFKTFFDKETEKDIFGDIDDISDDENSFTNQDGEAEDNEIITGIRQKDKPEETKEIKLIEQVNMNEGIGRGKILGNKPVFRSVQKSKPFIAEREELKAREGRKRRIQPIPFGIFKEEKLKTCLQFYKLFPWIKDQVLDVFVAPISSNFDDSFFIRSDFYEYISSPVGFAITDDEVEKFYRPKEKYYKLQCYGINKYYNENEPEIIHVNWNNQEYLFKIGILTENRGFLIQEADILLAEEDFIENWLGKSDKRREELLNSVNIPSDAKAVARNEILRSLLNVIPNADLLYTNRILTNIVEKIVDLSLNTSDFFLRVADLIVFINPNINFVSSVFPKRLAKMQYKPEILPLLTQREKLPEIFDDNRIPEATIEYVNRTIHFQIEKVYEDLVNYTVMYNVIPTRKATRPFQMGGKVKPTGRDDKIIIGLPEWKNACVNVNDVINIPDEDLIFYSDIEDQNSDVYCFPINELLDKFSREDIHNQYTGKDFSDTFVRRFLSVYSKPIQAERVVEVERVEEDNIPEGPLIKLIKAELLRLENNLIEPEYFQEEEIKCLECKKAVPAGEGMLSIFKGKKVAFCNMECFENKKW.

Positions 1–20 (MKQRQARLIGTPSQTRRQQE) are disordered. The stretch at 13–42 (SQTRRQQELAEKLEKVKEVLEDEKKRQFNE) forms a coiled coil.

The protein belongs to the IIV-6 268L family.

This is an uncharacterized protein from Invertebrate iridescent virus 6 (IIV-6).